A 449-amino-acid chain; its full sequence is MLNYTELENKNVLVVGLAKSGYEAAKLLLKLGANVKVNDGKDLSQDAHAKDLESMGIEVISGSHPFSLLDDDPIIVKNPGIPYTVSIIKEATNRGLKILTEVELSYLISEAPIIAVTGTNGKTTVTSLIGDMFQKSVLTGRLSGNIGYVASKVAQEVKSDEYLITELSSFQLLGIEEYKPHIAIITNIYSAHLDYHETLENYQNAKKQIYKNQTKDDYLICNYHQRHLIESENLEAKTFYFSTQQEVDGIYIKDGFIVFNGIRIINTKDLVLPGEHNLENILAAVLASIIAGVPVKAIVDSLVTFSGIDHRLQYIGTNRTNKYYNDSKATNTLATQFALNSFDQPIIWLCGGLDRGNEFDELIPYMENVRVMVVFGETQDKFAKLGNSQGKYVIKATDVEDAVDKIQDIVEPNDVVLLSPACASWDQYHTFEERGEKFIDRFRAHLPSY.

Position 118 to 124 (118 to 124) interacts with ATP; that stretch reads GTNGKTT.

The protein belongs to the MurCDEF family.

The protein localises to the cytoplasm. It carries out the reaction UDP-N-acetyl-alpha-D-muramoyl-L-alanine + D-glutamate + ATP = UDP-N-acetyl-alpha-D-muramoyl-L-alanyl-D-glutamate + ADP + phosphate + H(+). It functions in the pathway cell wall biogenesis; peptidoglycan biosynthesis. Functionally, cell wall formation. Catalyzes the addition of glutamate to the nucleotide precursor UDP-N-acetylmuramoyl-L-alanine (UMA). This Staphylococcus epidermidis (strain ATCC 12228 / FDA PCI 1200) protein is UDP-N-acetylmuramoylalanine--D-glutamate ligase.